Consider the following 403-residue polypeptide: Imidazolonepropionase (403 aa).

Fe(3+) contacts are provided by His74 and His76. Residues His74 and His76 each coordinate Zn(2+). 3 residues coordinate 4-imidazolone-5-propanoate: Arg83, Tyr146, and His179. Position 146 (Tyr146) interacts with N-formimidoyl-L-glutamate. His242 provides a ligand contact to Fe(3+). His242 lines the Zn(2+) pocket. Gln245 provides a ligand contact to 4-imidazolone-5-propanoate. A Fe(3+)-binding site is contributed by Asp317. Asp317 contributes to the Zn(2+) binding site. The N-formimidoyl-L-glutamate site is built by Asn319 and Gly321. Thr322 provides a ligand contact to 4-imidazolone-5-propanoate.

This sequence belongs to the metallo-dependent hydrolases superfamily. HutI family. Zn(2+) is required as a cofactor. It depends on Fe(3+) as a cofactor.

It is found in the cytoplasm. The catalysed reaction is 4-imidazolone-5-propanoate + H2O = N-formimidoyl-L-glutamate. The protein operates within amino-acid degradation; L-histidine degradation into L-glutamate; N-formimidoyl-L-glutamate from L-histidine: step 3/3. In terms of biological role, catalyzes the hydrolytic cleavage of the carbon-nitrogen bond in imidazolone-5-propanoate to yield N-formimidoyl-L-glutamate. It is the third step in the universal histidine degradation pathway. This chain is Imidazolonepropionase, found in Sphingopyxis alaskensis (strain DSM 13593 / LMG 18877 / RB2256) (Sphingomonas alaskensis).